Here is a 143-residue protein sequence, read N- to C-terminus: Nucleoside diphosphate kinase (143 aa).

Residues 1 to 132 (MVKPDGVQRG…LWFSPQELCQ (132 aa)) enclose the NDPK-like domain. Residues lysine 3, phenylalanine 51, arginine 79, threonine 85, arginine 96, valine 103, and asparagine 106 each contribute to the ADP site. 5 residues coordinate ATP: lysine 3, phenylalanine 51, arginine 79, threonine 85, and arginine 96. Position 106 (asparagine 106) interacts with ATP. Residue histidine 109 is the Pros-phosphohistidine intermediate of the active site.

It belongs to the NDK family. Homohexamer. It depends on Mg(2+) as a cofactor.

The catalysed reaction is a 2'-deoxyribonucleoside 5'-diphosphate + ATP = a 2'-deoxyribonucleoside 5'-triphosphate + ADP. It carries out the reaction a ribonucleoside 5'-diphosphate + ATP = a ribonucleoside 5'-triphosphate + ADP. The enzyme catalyses GDP + ATP = GTP + ADP. It functions in the pathway purine metabolism; purine nucleotide biosynthesis. Functionally, major role in the synthesis of nucleoside triphosphates other than ATP. The ATP gamma phosphate is transferred to the NDP beta phosphate via a ping-pong mechanism, using a phosphorylated active-site intermediate. This is Nucleoside diphosphate kinase from Schistosoma mansoni (Blood fluke).